A 92-amino-acid chain; its full sequence is DNA-directed RNA polymerase subunit Rpo11 (92 aa).

This sequence belongs to the archaeal Rpo11/eukaryotic RPB11/RPC19 RNA polymerase subunit family. Part of the RNA polymerase complex.

It is found in the cytoplasm. The catalysed reaction is RNA(n) + a ribonucleoside 5'-triphosphate = RNA(n+1) + diphosphate. Functionally, DNA-dependent RNA polymerase (RNAP) catalyzes the transcription of DNA into RNA using the four ribonucleoside triphosphates as substrates. The protein is DNA-directed RNA polymerase subunit Rpo11 of Methanosarcina barkeri (strain Fusaro / DSM 804).